The sequence spans 145 residues: D-aminoacyl-tRNA deacylase (145 aa).

Residues 137–138 (GP) carry the Gly-cisPro motif, important for rejection of L-amino acids motif.

This sequence belongs to the DTD family. Homodimer.

It is found in the cytoplasm. It catalyses the reaction glycyl-tRNA(Ala) + H2O = tRNA(Ala) + glycine + H(+). The enzyme catalyses a D-aminoacyl-tRNA + H2O = a tRNA + a D-alpha-amino acid + H(+). Its function is as follows. An aminoacyl-tRNA editing enzyme that deacylates mischarged D-aminoacyl-tRNAs. Also deacylates mischarged glycyl-tRNA(Ala), protecting cells against glycine mischarging by AlaRS. Acts via tRNA-based rather than protein-based catalysis; rejects L-amino acids rather than detecting D-amino acids in the active site. By recycling D-aminoacyl-tRNA to D-amino acids and free tRNA molecules, this enzyme counteracts the toxicity associated with the formation of D-aminoacyl-tRNA entities in vivo and helps enforce protein L-homochirality. This chain is D-aminoacyl-tRNA deacylase, found in Rhodococcus jostii (strain RHA1).